Reading from the N-terminus, the 622-residue chain is Cytochrome c oxidase subunit 1 (622 aa).

Over 1 to 27 (MLNALTEKRTRGSMLWDYLTTVDHKKI) the chain is Extracellular. A helical membrane pass occupies residues 28-46 (AILYLVAGGFFFLVGGIEA). Residues 47-68 (MFIRIQLAKPENAFLSAQAYNE) lie on the Cytoplasmic side of the membrane. The helical transmembrane segment at 69 to 88 (VMTMHGTTMIFLAAMPLLFA) threads the bilayer. Residue H73 coordinates Fe(II)-heme a. Residues 89–110 (LMNAVVPLQIGARDVSFPFLNA) lie on the Extracellular side of the membrane. A helical membrane pass occupies residues 111–128 (LGFWLFFFGGIFLNLSWF). At 129-159 (LGGAPDAGWTSYASLSLHSKGHGIDFFVLGL) the chain is on the cytoplasmic side. Residues 160-178 (QISGLGTLIAGINFLATII) form a helical membrane-spanning segment. Over 179–196 (NMRAPGMTYMRLPLFTWT) the chain is Extracellular. The helical transmembrane segment at 197 to 215 (TFVASALILFAFPPLTVGL) threads the bilayer. The Cytoplasmic segment spans residues 216-241 (ALMMLDRLFGTNFFNPELGGNTVIWE). The chain crosses the membrane as a helical span at residues 242–261 (HLFWIFGHPEVYILILPAFG). H249 and Y253 together coordinate Cu cation. Residues 249–253 (HPEVY) constitute a cross-link (1'-histidyl-3'-tyrosine (His-Tyr)). At 262–284 (IFSEVIPVFARKRLFGYSSMVFA) the chain is on the extracellular side. Residues 285–304 (IVLIGFLGFMVWVHHMFTTG) traverse the membrane as a helical segment. 2 residues coordinate Cu cation: H298 and H299. The Cytoplasmic portion of the chain corresponds to 305–312 (LGPIANAI). A helical transmembrane segment spans residues 313-331 (FAVATMAIAIPTGIKIFNW). At 332–346 (LLTIWGGNVKYTTAM) the chain is on the extracellular side. A helical transmembrane segment spans residues 347 to 366 (LYAVSFIPSFVLGGVTGVML). Topologically, residues 367–374 (AAAAADYQ) are cytoplasmic. The helical transmembrane segment at 375-394 (FHDTYFVVAHFHYVIIGGVV) threads the bilayer. Residue H384 coordinates heme a3. A Fe(II)-heme a-binding site is contributed by H386. Residues 395–421 (FGLLAGVHFWWPKMFGKILHETMGKIS) lie on the Extracellular side of the membrane. Residues 422–441 (FVLFFIGFHLTFFIQHFVGL) traverse the membrane as a helical segment. At 442 to 459 (MGMPRRVYTFLPGQGLET) the chain is on the cytoplasmic side. The helical transmembrane segment at 460-479 (GNLISTIGAFFMAAAVILLL) threads the bilayer. Residues 480–552 (VNVIWTSVKG…EPVDDIHMPN (73 aa)) lie on the Extracellular side of the membrane. A helical membrane pass occupies residues 553–572 (GSILPLIISFGLFVAAFGLL). Topologically, residues 573-580 (YRSDYAWG) are cytoplasmic. Residues 581 to 604 (LPVIFIGLGITFITMLLRSVIDDH) form a helical membrane-spanning segment. Topologically, residues 605–622 (GYHIHKEELPNDDKGVKA) are cytoplasmic.

This sequence belongs to the heme-copper respiratory oxidase family. The cofactor is Cu(2+). Requires heme as cofactor.

It localises to the cell membrane. It carries out the reaction 4 Fe(II)-[cytochrome c] + O2 + 8 H(+)(in) = 4 Fe(III)-[cytochrome c] + 2 H2O + 4 H(+)(out). The protein operates within energy metabolism; oxidative phosphorylation. Functionally, cytochrome c oxidase is the component of the respiratory chain that catalyzes the reduction of oxygen to water. Subunits 1-3 form the functional core of the enzyme complex. Co I is the catalytic subunit of the enzyme. Electrons originating in cytochrome c are transferred via the copper A center of subunit 2 and heme a of subunit 1 to the bimetallic center formed by heme a3 and copper B. This cytochrome c oxidase shows proton pump activity across the membrane in addition to the electron transfer. In Bacillus subtilis (strain 168), this protein is Cytochrome c oxidase subunit 1 (ctaD).